We begin with the raw amino-acid sequence, 239 residues long: Putative zinc finger protein 132L (239 aa).

The interval 20–40 is disordered; that stretch reads DASLSTKSPKREPSQEKEIKK. Positions 28–40 are enriched in basic and acidic residues; that stretch reads PKREPSQEKEIKK. C3H1-type zinc fingers lie at residues 44-68 and 81-106; these read IKKNKPCKYEEECKRSDCVFLHPGE and RRKTRMCKYVKKCNKGKNCPFAHDES. Positions 128–151 are disordered; that stretch reads PGECKFSHPPPPPPSPPSPPPKEE. Pro residues predominate over residues 135 to 147; the sequence is HPPPPPPSPPSPP.

In Acheta domesticus (House cricket), this protein is Putative zinc finger protein 132L.